A 152-amino-acid chain; its full sequence is Holo-[acyl-carrier-protein] synthase (152 aa).

2 residues coordinate Mg(2+): Asp-7 and Glu-60.

Belongs to the P-Pant transferase superfamily. AcpS family. Requires Mg(2+) as cofactor.

It localises to the cytoplasm. It catalyses the reaction apo-[ACP] + CoA = holo-[ACP] + adenosine 3',5'-bisphosphate + H(+). In terms of biological role, transfers the 4'-phosphopantetheine moiety from coenzyme A to a Ser of acyl-carrier-protein. The protein is Holo-[acyl-carrier-protein] synthase of Bifidobacterium adolescentis (strain ATCC 15703 / DSM 20083 / NCTC 11814 / E194a).